We begin with the raw amino-acid sequence, 126 residues long: Ribosome-binding factor A (126 aa).

Belongs to the RbfA family. In terms of assembly, monomer. Binds 30S ribosomal subunits, but not 50S ribosomal subunits or 70S ribosomes.

The protein localises to the cytoplasm. One of several proteins that assist in the late maturation steps of the functional core of the 30S ribosomal subunit. Associates with free 30S ribosomal subunits (but not with 30S subunits that are part of 70S ribosomes or polysomes). Required for efficient processing of 16S rRNA. May interact with the 5'-terminal helix region of 16S rRNA. In Halorhodospira halophila (strain DSM 244 / SL1) (Ectothiorhodospira halophila (strain DSM 244 / SL1)), this protein is Ribosome-binding factor A.